The chain runs to 314 residues: Ferrochelatase (314 aa).

2 residues coordinate Fe cation: H184 and E259.

The protein belongs to the ferrochelatase family.

The protein resides in the cytoplasm. It carries out the reaction heme b + 2 H(+) = protoporphyrin IX + Fe(2+). It functions in the pathway porphyrin-containing compound metabolism; protoheme biosynthesis; protoheme from protoporphyrin-IX: step 1/1. Catalyzes the ferrous insertion into protoporphyrin IX. This Chlamydia trachomatis serovar L2 (strain ATCC VR-902B / DSM 19102 / 434/Bu) protein is Ferrochelatase.